The primary structure comprises 217 residues: MSGIRADGTGDVGLIIAVKRLGAAKTRLAPVFSAAARESVVLAMLMDTLTAAARVGDLRSITVITPDESAAAAATELGAEVLADPTRQGDPDPLNNAILTAEQVVSGSVPNIVVLQGDLPAMQTQELADAICAARAHQRSFVADRLGTGTAALCAFGSALDPQFGPDSSARHRRSGAVELTGAWPGLRCDVDTPADLAAARSLGVGPATARVVAHHR.

Residues Thr-150, Gly-165, and Ser-168 each coordinate phosphoenolpyruvate.

The protein belongs to the CofC family.

It catalyses the reaction phosphoenolpyruvate + GTP + H(+) = enolpyruvoyl-2-diphospho-5'-guanosine + diphosphate. The protein operates within cofactor biosynthesis; coenzyme F420 biosynthesis. In terms of biological role, guanylyltransferase that catalyzes the activation of phosphoenolpyruvate (PEP) as enolpyruvoyl-2-diphospho-5'-guanosine, via the condensation of PEP with GTP. It is involved in the biosynthesis of coenzyme F420, a hydride carrier cofactor. The polypeptide is Phosphoenolpyruvate guanylyltransferase (Mycobacterium marinum (strain ATCC BAA-535 / M)).